Consider the following 281-residue polypeptide: 2-hydroxymuconate semialdehyde hydrolase (281 aa).

Residues 30 to 55 form a disordered region; that stretch reads FPALLIHGSGPASPPGPTGAGSFRSS. An AB hydrolase-1 domain is found at 31-261; that stretch reads PALLIHGSGP…QCGHWTQIEH (231 aa). Active-site residues include Ser-106, Asp-227, and His-255.

This sequence belongs to the DmpD/TodF/XylF esterase family.

It carries out the reaction (2Z,4E)-2-hydroxy-6-oxohexa-2,4-dienoate + H2O = 2-oxopent-4-enoate + formate + H(+). Its pathway is aromatic compound metabolism; benzoate degradation via hydroxylation. In terms of biological role, catalyzes the conversion of 2-hydroxymuconate semialdehyde to 2-hydroxypent-2,4-dienoate. This Pseudomonas putida (Arthrobacter siderocapsulatus) protein is 2-hydroxymuconate semialdehyde hydrolase (xylF).